The primary structure comprises 795 residues: MKFSEQWVREWVNPAVSTEQLCEQITMLGLEVDGVESVAGTFNGVVVGEVVECAQHPDADKLRVTKVNVGGDRLLDIVCGAANCRQGLKVACATEGAVLPGDFKIKKTKLRGQPSEGMLCSFSELGIDVEADGIIELPLDAPIGTDLREYLALDDNAIEISLTPNRADCLSIAGIAREIGVVNKQLVNQPHFEAVPATISDKVQIDLQAPEACPRYLLRVIKNVNVKAPSPMWMQEKLRRCGIRSIDPIVDITNYILLEFGQPMHAFDAAKVTQPVQVRFAKEGEELVLLDGSTAKLQSNTLLIADQNGPLAMAGIFGGATSGVNSETKDVILESAFFAPLAIAGRARQYGLHTDASHRFERGVDFELARKAMERATTLLLEICGGEAGEICEASSETHLPKVNTVQLRRSKLDALLGHHIETGSVTEIFHRLGFDVTYANDIWTVTSASWRFDIEIEEDLIEEVARIYGYNSIPNNAPLAHLRMREHKESDLDLARIKTALVDADYQEAITYSFVDPKIQSLLHPHKEALVLPNPISVEMSAMRVSLISGLLGAVLYNQNRQQSRVRLFETGLRFVPDANAEFGVRQEFVLSAVITGTAKSEHWAGKAESVDFFDLKGDLESVLSLTEGGNRVRFVAKQFDALHPGQSAAIELDGQEIGFIGAIHPSISQKLGLNGKTFVFEILWNAIAARNVVQAKEISKFPANRRDLALVVADSVPAGELIAACKQAGGEKLVQVNLFDVYQGVGVAEGYKSLAISLTVQDNEKTLEDEEINAVISAVLAEVKQRFNAELRD.

In terms of domain architecture, tRNA-binding spans 39-148; that stretch reads AGTFNGVVVG…LDAPIGTDLR (110 aa). One can recognise a B5 domain in the interval 401-476; sequence PKVNTVQLRR…RIYGYNSIPN (76 aa). Residues Asp-454, Asp-460, Glu-463, and Glu-464 each coordinate Mg(2+). In terms of domain architecture, FDX-ACB spans 701 to 794; the sequence is SKFPANRRDL…VKQRFNAELR (94 aa).

This sequence belongs to the phenylalanyl-tRNA synthetase beta subunit family. Type 1 subfamily. Tetramer of two alpha and two beta subunits. It depends on Mg(2+) as a cofactor.

It is found in the cytoplasm. It carries out the reaction tRNA(Phe) + L-phenylalanine + ATP = L-phenylalanyl-tRNA(Phe) + AMP + diphosphate + H(+). The sequence is that of Phenylalanine--tRNA ligase beta subunit from Haemophilus influenzae (strain 86-028NP).